Reading from the N-terminus, the 66-residue chain is SPbeta prophage-derived uncharacterized protein YopM (66 aa).

This is SPbeta prophage-derived uncharacterized protein YopM (yopM) from Bacillus subtilis (strain 168).